Reading from the N-terminus, the 210-residue chain is Outer-membrane lipoprotein LolB (210 aa).

An N-terminal signal peptide occupies residues 1-18 (MKKFTKILSLSTLLFLAG). C19 carries N-palmitoyl cysteine lipidation. Residue C19 is the site of S-diacylglycerol cysteine attachment.

It belongs to the LolB family. In terms of assembly, monomer.

The protein localises to the cell outer membrane. Plays a critical role in the incorporation of lipoproteins in the outer membrane after they are released by the LolA protein. The protein is Outer-membrane lipoprotein LolB of Actinobacillus pleuropneumoniae serotype 5b (strain L20).